The sequence spans 146 residues: Nucleoside diphosphate kinase (146 aa).

Positions 11, 59, 87, 93, 104, and 114 each coordinate ATP. H117 functions as the Pros-phosphohistidine intermediate in the catalytic mechanism.

This sequence belongs to the NDK family. As to quaternary structure, homotetramer. Requires Mg(2+) as cofactor.

It is found in the cytoplasm. The catalysed reaction is a 2'-deoxyribonucleoside 5'-diphosphate + ATP = a 2'-deoxyribonucleoside 5'-triphosphate + ADP. It carries out the reaction a ribonucleoside 5'-diphosphate + ATP = a ribonucleoside 5'-triphosphate + ADP. In terms of biological role, major role in the synthesis of nucleoside triphosphates other than ATP. The ATP gamma phosphate is transferred to the NDP beta phosphate via a ping-pong mechanism, using a phosphorylated active-site intermediate. In Anaplasma marginale (strain Florida), this protein is Nucleoside diphosphate kinase.